The chain runs to 234 residues: t-SNARE protein aex-4 (234 aa).

2 consecutive t-SNARE coiled-coil homology domains span residues 37-99 and 170-232; these read AKLN…ITAM and DAIE…VKKL.

Belongs to the SNAP-25 family. Expressed in intestinal cells.

It localises to the cell membrane. T-SNARE protein which regulates the secretion of aex-5 from intestinal cells. Involved in the defecation motor program, which is a coordinated series of three muscle contractions that occurs every 45 seconds. The sequence is that of t-SNARE protein aex-4 from Caenorhabditis elegans.